We begin with the raw amino-acid sequence, 223 residues long: MNKDLAAMRVGYAHQGADGRYVDSDLDADQLIGGWLPLMRLWLEDAVEAGVPEPNAMTLGTVDEHGHPCTRTVLCKGLSTDGVLFFTNYDSDKGRQLEAVPYASVTFTWVPVARQITVRGPVERVSAEVTDEYWHSRPRGSRLGAWASEQSKPIGSRAELDAALLHAAERFPVDVDIPVRPDWGGILIRPAVVEFWQGRANRMHNRIRTSLVDGSWTVERLQP.

Substrate contacts are provided by residues 9 to 12 (RVGY) and lysine 76. FMN-binding positions include 71 to 76 (RTVLCK), 86 to 87 (FT), lysine 93, and glutamine 115. Substrate-binding residues include tyrosine 133, arginine 137, and serine 141. FMN contacts are provided by residues 150–151 (QS) and tryptophan 196. Residue 202-204 (RMH) coordinates substrate. Arginine 206 lines the FMN pocket.

The protein belongs to the pyridoxamine 5'-phosphate oxidase family. As to quaternary structure, homodimer. FMN serves as cofactor.

It catalyses the reaction pyridoxamine 5'-phosphate + O2 + H2O = pyridoxal 5'-phosphate + H2O2 + NH4(+). The enzyme catalyses pyridoxine 5'-phosphate + O2 = pyridoxal 5'-phosphate + H2O2. The protein operates within cofactor metabolism; pyridoxal 5'-phosphate salvage; pyridoxal 5'-phosphate from pyridoxamine 5'-phosphate: step 1/1. It participates in cofactor metabolism; pyridoxal 5'-phosphate salvage; pyridoxal 5'-phosphate from pyridoxine 5'-phosphate: step 1/1. Functionally, catalyzes the oxidation of either pyridoxine 5'-phosphate (PNP) or pyridoxamine 5'-phosphate (PMP) into pyridoxal 5'-phosphate (PLP). This Rhodococcus jostii (strain RHA1) protein is Pyridoxine/pyridoxamine 5'-phosphate oxidase.